Here is a 214-residue protein sequence, read N- to C-terminus: MSQITIALTKGRIEEDTVKLLTQAGFDMSFMADKGRSLIFESPDGRFRFLLVKGPDVTTYVRHGVADLGIVGKDILFEHPTGYLELLDLNFGLCKFSLASVPSYDPHDHKRKRIATKYPTVATNYFNQKGEDVEIISIQGSVEISPVLGLADAIVDIVETGHTLSANGLLVFEDICRVSVRLIANQASLKNNPDIMPFVAKIESLVGRREVAFK.

This sequence belongs to the ATP phosphoribosyltransferase family. Short subfamily. In terms of assembly, heteromultimer composed of HisG and HisZ subunits.

Its subcellular location is the cytoplasm. The enzyme catalyses 1-(5-phospho-beta-D-ribosyl)-ATP + diphosphate = 5-phospho-alpha-D-ribose 1-diphosphate + ATP. The protein operates within amino-acid biosynthesis; L-histidine biosynthesis; L-histidine from 5-phospho-alpha-D-ribose 1-diphosphate: step 1/9. In terms of biological role, catalyzes the condensation of ATP and 5-phosphoribose 1-diphosphate to form N'-(5'-phosphoribosyl)-ATP (PR-ATP). Has a crucial role in the pathway because the rate of histidine biosynthesis seems to be controlled primarily by regulation of HisG enzymatic activity. This is ATP phosphoribosyltransferase from Streptococcus gordonii (strain Challis / ATCC 35105 / BCRC 15272 / CH1 / DL1 / V288).